The following is a 572-amino-acid chain: Proline--tRNA ligase (572 aa).

Belongs to the class-II aminoacyl-tRNA synthetase family. ProS type 1 subfamily. In terms of assembly, homodimer.

The protein resides in the cytoplasm. It catalyses the reaction tRNA(Pro) + L-proline + ATP = L-prolyl-tRNA(Pro) + AMP + diphosphate. In terms of biological role, catalyzes the attachment of proline to tRNA(Pro) in a two-step reaction: proline is first activated by ATP to form Pro-AMP and then transferred to the acceptor end of tRNA(Pro). As ProRS can inadvertently accommodate and process non-cognate amino acids such as alanine and cysteine, to avoid such errors it has two additional distinct editing activities against alanine. One activity is designated as 'pretransfer' editing and involves the tRNA(Pro)-independent hydrolysis of activated Ala-AMP. The other activity is designated 'posttransfer' editing and involves deacylation of mischarged Ala-tRNA(Pro). The misacylated Cys-tRNA(Pro) is not edited by ProRS. The polypeptide is Proline--tRNA ligase (Photorhabdus laumondii subsp. laumondii (strain DSM 15139 / CIP 105565 / TT01) (Photorhabdus luminescens subsp. laumondii)).